The primary structure comprises 253 residues: LexA repressor (253 aa).

The disordered stretch occupies residues 1–33 (MTSQGRGTRRGGARGNVRAFPENPADAAGLTPR). The segment at residues 54–74 (VREIGEAVGLTSTSSVAHQLK) is a DNA-binding region (H-T-H motif). Residues serine 177 and lysine 214 each act as for autocatalytic cleavage activity in the active site.

It belongs to the peptidase S24 family. Homodimer.

It carries out the reaction Hydrolysis of Ala-|-Gly bond in repressor LexA.. In terms of biological role, represses a number of genes involved in the response to DNA damage (SOS response), including recA and lexA. In the presence of single-stranded DNA, RecA interacts with LexA causing an autocatalytic cleavage which disrupts the DNA-binding part of LexA, leading to derepression of the SOS regulon and eventually DNA repair. The chain is LexA repressor from Frankia alni (strain DSM 45986 / CECT 9034 / ACN14a).